The chain runs to 387 residues: Succinate--CoA ligase [ADP-forming] subunit beta (387 aa).

The region spanning 9–245 (KDLLESYGLK…KSQENAKELK (237 aa)) is the ATP-grasp domain. Residues Lys-46, 53–55 (GRG), Glu-100, Tyr-103, and Glu-108 contribute to the ATP site. Residues Asn-200 and Asp-214 each contribute to the Mg(2+) site. Residues Asn-265 and 322–324 (GIV) contribute to the substrate site.

This sequence belongs to the succinate/malate CoA ligase beta subunit family. As to quaternary structure, heterotetramer of two alpha and two beta subunits. Mg(2+) is required as a cofactor.

The enzyme catalyses succinate + ATP + CoA = succinyl-CoA + ADP + phosphate. The catalysed reaction is GTP + succinate + CoA = succinyl-CoA + GDP + phosphate. The protein operates within carbohydrate metabolism; tricarboxylic acid cycle; succinate from succinyl-CoA (ligase route): step 1/1. Its function is as follows. Succinyl-CoA synthetase functions in the citric acid cycle (TCA), coupling the hydrolysis of succinyl-CoA to the synthesis of either ATP or GTP and thus represents the only step of substrate-level phosphorylation in the TCA. The beta subunit provides nucleotide specificity of the enzyme and binds the substrate succinate, while the binding sites for coenzyme A and phosphate are found in the alpha subunit. The sequence is that of Succinate--CoA ligase [ADP-forming] subunit beta from Francisella tularensis subsp. holarctica (strain FTNF002-00 / FTA).